The sequence spans 487 residues: MFRQLKKNLVATLIAALALGQVAPAFADPADTLPDMGTSAGSTLSIGQEMQMGDFYVRQLRGSAPLINDPLLVQYINALGMRLVSHADSVKTPFHFFLINNDEINAFAFFGGNVVLHSALFRYADNESQLASVMAHEISHVTQRHLARAMEDQKRSAPLTWVGALGSILLAMASPQAGMAALTGTLAGTRQGMISFTQQNEQEADRIGIQVLQRAGFDPQAMPSFLEKLLDQARYSTRPPEILLTHPLPESRLADARNRANQMRPVVVQSSADFYFAKARALGMYNSGRNQLTSDLLDQWSKGNVRQQHAAQYGRALQAMEASKYDEARKTLQPLLSAEPNNAWYLDLATDIDLGQKRANDAINRLKNARDLRVNPVLQLNLANAYLQGGQPKAAETILNRYTFSHKDDGNGWDLLAQAEAALNNRDQELAARAESYALAGRLDQAISLLSSASAQAKLGSQQQARYDARIDQLRQLQERFKPYTKM.

The first 27 residues, 1-27 (MFRQLKKNLVATLIAALALGQVAPAFA), serve as a signal peptide directing secretion. H136 provides a ligand contact to Zn(2+). E137 is an active-site residue. Zn(2+)-binding residues include H140 and E201. D205 acts as the Proton donor in catalysis. TPR repeat units lie at residues 309-342 (HAAQ…EPNN) and 427-460 (DQEL…AKLG).

The protein belongs to the peptidase M48 family. BepA subfamily. Zn(2+) serves as cofactor.

It is found in the periplasm. Its function is as follows. Functions both as a chaperone and a metalloprotease. Maintains the integrity of the outer membrane by promoting either the assembly or the elimination of outer membrane proteins, depending on their folding state. The chain is Beta-barrel assembly-enhancing protease from Salmonella typhi.